Reading from the N-terminus, the 118-residue chain is Large ribosomal subunit protein uL24 (118 aa).

The protein belongs to the universal ribosomal protein uL24 family. As to quaternary structure, part of the 50S ribosomal subunit.

Its function is as follows. One of two assembly initiator proteins, it binds directly to the 5'-end of the 23S rRNA, where it nucleates assembly of the 50S subunit. One of the proteins that surrounds the polypeptide exit tunnel on the outside of the subunit. This chain is Large ribosomal subunit protein uL24, found in Prochlorococcus marinus (strain MIT 9215).